Reading from the N-terminus, the 448-residue chain is Beta-alanine--pyruvate aminotransferase (448 aa).

Residue Trp-61 coordinates substrate. 120 to 121 is a pyridoxal 5'-phosphate binding site; it reads GS. Lys-288 carries the N6-(pyridoxal phosphate)lysine modification. Residue Thr-327 coordinates pyridoxal 5'-phosphate. Substrate-binding residues include Arg-414 and Gln-421.

This sequence belongs to the class-III pyridoxal-phosphate-dependent aminotransferase family. Homotetramer. Pyridoxal 5'-phosphate is required as a cofactor.

It catalyses the reaction 3-oxopropanoate + L-alanine = beta-alanine + pyruvate. With respect to regulation, inhibited by gabaculine (5-amino-1,3-cyclohexadienylcarboxylic acid). Functionally, involved in the degradation of beta-alanine. Catalyzes the transfer of the amino group from beta-alanine to pyruvate to yield L-alanine and 3-oxopropanoate. It can also accept both 4-aminobutyrate and (S)-alpha-methylbenzylamine (MBA) as amino-group donors in the presence of pyruvate as an amine acceptor. In Pseudomonas aeruginosa (strain ATCC 15692 / DSM 22644 / CIP 104116 / JCM 14847 / LMG 12228 / 1C / PRS 101 / PAO1), this protein is Beta-alanine--pyruvate aminotransferase (bauA).